A 404-amino-acid chain; its full sequence is L-cysteine:1D-myo-inositol 2-amino-2-deoxy-alpha-D-glucopyranoside ligase 1 (404 aa).

Cys-47 is a binding site for Zn(2+). L-cysteinyl-5'-AMP is bound by residues 47–50, Thr-62, and 85–87; these read CGIT and NIT. Positions 49-59 match the 'HIGH' region motif; the sequence is ITPYDSTHLGH. Residues 188 to 193 carry the 'ERGGDP' region motif; that stretch reads ERGGDP. Residue Trp-228 participates in L-cysteinyl-5'-AMP binding. Position 232 (Cys-232) interacts with Zn(2+). 250–252 contacts L-cysteinyl-5'-AMP; sequence GSD. His-257 provides a ligand contact to Zn(2+). Position 284 (Ile-284) interacts with L-cysteinyl-5'-AMP. Positions 290-294 match the 'KMSKS' region motif; it reads KMSKS.

The protein belongs to the class-I aminoacyl-tRNA synthetase family. MshC subfamily. In terms of assembly, monomer. Zn(2+) serves as cofactor.

It catalyses the reaction 1D-myo-inositol 2-amino-2-deoxy-alpha-D-glucopyranoside + L-cysteine + ATP = 1D-myo-inositol 2-(L-cysteinylamino)-2-deoxy-alpha-D-glucopyranoside + AMP + diphosphate + H(+). Functionally, catalyzes the ATP-dependent condensation of GlcN-Ins and L-cysteine to form L-Cys-GlcN-Ins. This is L-cysteine:1D-myo-inositol 2-amino-2-deoxy-alpha-D-glucopyranoside ligase 1 from Corynebacterium urealyticum (strain ATCC 43042 / DSM 7109).